Reading from the N-terminus, the 120-residue chain is MEQFTQNQNQPHTQESVQNTNVSQFRNETVINGSPVSGNPDGTDPSGLRRDPVQQHLEAERQERAQIEAGKEICRRRFGGATCDDESAKIHAQFDPNNRSVQPTEFYRFNDHEINKYGYF.

A compositionally biased stretch (polar residues) spans 1–37 (MEQFTQNQNQPHTQESVQNTNVSQFRNETVINGSPVS). Residues 1–65 (MEQFTQNQNQ…HLEAERQERA (65 aa)) form a disordered region. Residues 47-65 (GLRRDPVQQHLEAERQERA) are compositionally biased toward basic and acidic residues.

The protein belongs to the microviridae B protein family. In terms of assembly, component of the procapsid complex composed of 60 copies of the internally located B, 240 copies of the external scaffolding protein D, 60 copies of each of the viral structural proteins F and G proteins, and 12 copies of H. In terms of processing, the proteolytic cleavage of the internal scaffolding protein B releases the scaffold protein in order to continue virion assembly.

It localises to the host cytoplasm. In terms of biological role, participates in the assembly of the viral procapsid in the cytoplasm. Forms first a 12S pre-assembly complex with protein H, and F and G pentamers, then twelve 12S complexes are joined by the D protein to form the procapsid. Internal scaffold protein B is released from the procapsid upon genome packaging. Autoproteolytic activity cleaves protein B and probably facilitates its removal through the pores of the procapsid. The polypeptide is Internal scaffolding protein B (B) (Escherichia coli (Bacteriophage G4)).